The primary structure comprises 404 residues: O-antigen ligase (404 aa).

11 consecutive transmembrane segments (helical) span residues 16-32, 39-55, 67-84, 96-115, 127-147, 168-183, 189-221, 228-246, 324-343, 363-379, and 385-401; these read IWNKALVFLFVATYFLD, HLIIILMVITAIYQVSR, SVFYSVAVLSLILVYSIL, FENTVLEGFLLYTLLIPVLL, VLFSFLTSLGLRCLAESILYI, SMVFLFPALLNIWLFR, LVFLVLSAIYLFFILGTLSRGAWLAVLIVGVLW, WKLIGVGAILLAIIGALVI, ILYIWFSAGILGLASLVYLY, YNAHLLLFLSFVGFYIV, and QVDIAQIGIITGFLLAL.

Belongs to the O-antigen ligase family.

It is found in the cell inner membrane. It catalyses the reaction a lipid-linked O antigen + a lipid A-core oligosaccharide = a lipopolysaccharide + a polyisoprenyl diphosphate.. It participates in bacterial outer membrane biogenesis; lipopolysaccharide biosynthesis. Transferase involved in the biosynthesis of the lipopolysaccharide (LPS). Catalyzes the transfer of a polymerized O-antigen molecule from its polyprenyl diphosphate membrane anchor to a terminal sugar of the lipid A-core oligosaccharide, finalizing the biosynthesis of the lipopolysaccharide. May also be involved in a feedback mechanism to regulate O-unit synthesis, based on the availability of O units on the periplasmic face of the membrane. The protein is O-antigen ligase of Salmonella typhimurium (strain LT2 / SGSC1412 / ATCC 700720).